The primary structure comprises 282 residues: Pantothenate synthetase (282 aa).

Methionine 32–histidine 39 is an ATP binding site. Catalysis depends on histidine 39, which acts as the Proton donor. Glutamine 63 contacts (R)-pantoate. Residue glutamine 63 coordinates beta-alanine. Residue glycine 149 to aspartate 152 coordinates ATP. Glutamine 155 is a binding site for (R)-pantoate. ATP is bound by residues valine 178 and leucine 186–arginine 189.

It belongs to the pantothenate synthetase family. In terms of assembly, homodimer.

The protein resides in the cytoplasm. It carries out the reaction (R)-pantoate + beta-alanine + ATP = (R)-pantothenate + AMP + diphosphate + H(+). It functions in the pathway cofactor biosynthesis; (R)-pantothenate biosynthesis; (R)-pantothenate from (R)-pantoate and beta-alanine: step 1/1. In terms of biological role, catalyzes the condensation of pantoate with beta-alanine in an ATP-dependent reaction via a pantoyl-adenylate intermediate. In Paracoccus denitrificans (strain Pd 1222), this protein is Pantothenate synthetase.